The primary structure comprises 942 residues: DNA polymerase I (942 aa).

The region spanning 177–269 is the 5'-3' exonuclease domain; sequence EPDQLADLRG…LEAARIGVYD (93 aa). Residues 340–522 form the 3'-5' exonuclease domain; the sequence is TIVRDATALA…LTERLQRQLE (183 aa).

It belongs to the DNA polymerase type-A family. Single-chain monomer with multiple functions.

The enzyme catalyses DNA(n) + a 2'-deoxyribonucleoside 5'-triphosphate = DNA(n+1) + diphosphate. Functionally, in addition to polymerase activity, this DNA polymerase exhibits 3'-5' and 5'-3' exonuclease activity. The sequence is that of DNA polymerase I (polA) from Chloroflexus aurantiacus (strain ATCC 29366 / DSM 635 / J-10-fl).